Consider the following 233-residue polypeptide: Uridylate kinase (233 aa).

9–10 (GS) contacts ATP. Residue glycine 43 participates in UMP binding. Residues glycine 44 and arginine 48 each contribute to the ATP site. UMP-binding positions include aspartate 65 and 113 to 119 (VTPGQTT). ATP contacts are provided by threonine 139, tyrosine 145, and aspartate 148.

Belongs to the UMP kinase family. Homohexamer.

Its subcellular location is the cytoplasm. The enzyme catalyses UMP + ATP = UDP + ADP. It functions in the pathway pyrimidine metabolism; CTP biosynthesis via de novo pathway; UDP from UMP (UMPK route): step 1/1. With respect to regulation, inhibited by UTP. Catalyzes the reversible phosphorylation of UMP to UDP. The protein is Uridylate kinase of Methanosarcina mazei (strain ATCC BAA-159 / DSM 3647 / Goe1 / Go1 / JCM 11833 / OCM 88) (Methanosarcina frisia).